The following is a 500-amino-acid chain: Probable cytosol aminopeptidase (500 aa).

2 residues coordinate Mn(2+): lysine 268 and aspartate 273. Lysine 280 is a catalytic residue. 3 residues coordinate Mn(2+): aspartate 291, aspartate 350, and glutamate 352. The active site involves arginine 354.

This sequence belongs to the peptidase M17 family. The cofactor is Mn(2+).

It localises to the cytoplasm. The catalysed reaction is Release of an N-terminal amino acid, Xaa-|-Yaa-, in which Xaa is preferably Leu, but may be other amino acids including Pro although not Arg or Lys, and Yaa may be Pro. Amino acid amides and methyl esters are also readily hydrolyzed, but rates on arylamides are exceedingly low.. It carries out the reaction Release of an N-terminal amino acid, preferentially leucine, but not glutamic or aspartic acids.. Its function is as follows. Presumably involved in the processing and regular turnover of intracellular proteins. Catalyzes the removal of unsubstituted N-terminal amino acids from various peptides. The protein is Probable cytosol aminopeptidase of Baumannia cicadellinicola subsp. Homalodisca coagulata.